A 151-amino-acid polypeptide reads, in one-letter code: Type 4 adapter protein IcmW (151 aa).

The T4BSS is a complex nanomachine composed of several subcomplexes. This subunit is part of the Type IV Coupling Complex (T4CC), a subcomplex composed of the DotLMNYZ core and the IcmSW-LvgA adapter subunits, linked by the C-terminal tail of DotL. Interacts with IcmS. IcmS and IcmW form a stable complex. Interaction with IcmS greatly enhances the stability of IcmW. Interacts directly with the type 4 coupling protein DotL. Interacts with LvgA. Interacts with effector proteins.

Its subcellular location is the cytoplasm. Its activity is regulated as follows. Interaction with DotL is critical for the export of IcmSW-dependent substrates. Its function is as follows. Component of the Dot/Icm type IVB secretion system (T4BSS), which is used to inject bacterial effector proteins into eukaryotic host cells. Part of a subcomplex which recruits effector proteins and delivers them to the core transmembrane subcomplex. The IcmS/IcmW protein complex plays an important role in protein translocation by interacting with multiple Dot/Icm effector proteins to facilitate their translocation into host cells. Interaction promotes conformational changes in the effector protein, which may facilitate display of a C-terminal translocation signal. May maintain the substrates in a translocation competent form. Required for intracellular growth in host cells, replicative phagosome formation and phagosome trafficking. The sequence is that of Type 4 adapter protein IcmW from Legionella pneumophila subsp. pneumophila (strain Philadelphia 1 / ATCC 33152 / DSM 7513).